The following is a 600-amino-acid chain: Elongation factor 4 (600 aa).

The tr-type G domain occupies 5–187 (KYIRNFSIIA…AIVNKLPPPK (183 aa)). GTP is bound by residues 17 to 22 (DHGKST) and 134 to 137 (NKID).

This sequence belongs to the TRAFAC class translation factor GTPase superfamily. Classic translation factor GTPase family. LepA subfamily.

The protein localises to the cell inner membrane. It carries out the reaction GTP + H2O = GDP + phosphate + H(+). Its function is as follows. Required for accurate and efficient protein synthesis under certain stress conditions. May act as a fidelity factor of the translation reaction, by catalyzing a one-codon backward translocation of tRNAs on improperly translocated ribosomes. Back-translocation proceeds from a post-translocation (POST) complex to a pre-translocation (PRE) complex, thus giving elongation factor G a second chance to translocate the tRNAs correctly. Binds to ribosomes in a GTP-dependent manner. The protein is Elongation factor 4 of Rickettsia canadensis (strain McKiel).